A 989-amino-acid polypeptide reads, in one-letter code: Phosphoenolpyruvate carboxylase (989 aa).

Residues H175 and K630 contribute to the active site.

The protein belongs to the PEPCase type 1 family. It depends on Mg(2+) as a cofactor.

It catalyses the reaction oxaloacetate + phosphate = phosphoenolpyruvate + hydrogencarbonate. Forms oxaloacetate, a four-carbon dicarboxylic acid source for the tricarboxylic acid cycle. This is Phosphoenolpyruvate carboxylase from Prochlorococcus marinus (strain MIT 9215).